Reading from the N-terminus, the 256-residue chain is MLRIADKTFDSHLFTGTGKFASSQLMVEAIRASGSQLVTLAMKRVDLRQHNDAILAPLIDAGVTLLPNTSGAKTAEEAIFAAQLAREALGTHWLKLEIHPDARWLLPDPVETLKAAEALVKQGFVVLPYCGADPVLCKRLEEVGCAAVMPLGAPIGSNQGLETRAMLEIIIQQATVPVVVDAGIGVPSHATQALEMGADAVLVNTAIAVADDPVMMAQAFRLAVEAGVMARRAVPGTRSSYAQATSPLTGFLEASA.

The Schiff-base intermediate with DXP role is filled by K95. 1-deoxy-D-xylulose 5-phosphate contacts are provided by residues G156, 182–183, and 204–205; these read AG and NT.

Belongs to the ThiG family. In terms of assembly, homotetramer. Forms heterodimers with either ThiH or ThiS.

The protein localises to the cytoplasm. It catalyses the reaction [ThiS sulfur-carrier protein]-C-terminal-Gly-aminoethanethioate + 2-iminoacetate + 1-deoxy-D-xylulose 5-phosphate = [ThiS sulfur-carrier protein]-C-terminal Gly-Gly + 2-[(2R,5Z)-2-carboxy-4-methylthiazol-5(2H)-ylidene]ethyl phosphate + 2 H2O + H(+). The protein operates within cofactor biosynthesis; thiamine diphosphate biosynthesis. Its function is as follows. Catalyzes the rearrangement of 1-deoxy-D-xylulose 5-phosphate (DXP) to produce the thiazole phosphate moiety of thiamine. Sulfur is provided by the thiocarboxylate moiety of the carrier protein ThiS. In vitro, sulfur can be provided by H(2)S. The polypeptide is Thiazole synthase (Citrobacter koseri (strain ATCC BAA-895 / CDC 4225-83 / SGSC4696)).